The following is a 155-amino-acid chain: MTDPLIKRSGIQEEEDLTTLKFPRDLKDAKFLLNSEVAILLEHRKGISESEGTEFPQNTLLIHLYYNSINDIIRTFHKTLAYAEKFSRYKNKTSIKQVRTALSKQNLEEFEIASLANLCPEISDEAKSLIPSLKKMEDDELQAILDELSNLRKFN.

The protein belongs to the eukaryotic RPB4 RNA polymerase subunit family. As to quaternary structure, component of the RNA polymerase II (Pol II) complex consisting of 12 subunits. RPB4 and RPB7 form a subcomplex that protrudes from the 10-subunit Pol II core complex.

Its subcellular location is the nucleus. DNA-dependent RNA polymerase catalyzes the transcription of DNA into RNA using the four ribonucleoside triphosphates as substrates. Component of RNA polymerase II which synthesizes mRNA precursors and many functional non-coding RNAs. Pol II is the central component of the basal RNA polymerase II transcription machinery. It is composed of mobile elements that move relative to each other. RPB4 is part of a subcomplex with RPB7 that binds to a pocket formed by RPB1, RPB2 and RPB6 at the base of the clamp element. The RPB4-RPB7 subcomplex seems to lock the clamp via RPB7 in the closed conformation thus preventing double-stranded DNA to enter the active site cleft. The RPB4-RPB7 subcomplex binds single-stranded DNA and RNA. The chain is DNA-directed RNA polymerase II subunit rpb4 (polr2d) from Dictyostelium discoideum (Social amoeba).